Consider the following 211-residue polypeptide: Large ribosomal subunit protein uL4 (211 aa).

2 disordered regions span residues 1–28 (MAQA…ETEP) and 48–99 (TAST…GPRY). The segment covering 10 to 28 (RTGRRSEMELKGPRFETEP) has biased composition (basic and acidic residues).

Belongs to the universal ribosomal protein uL4 family. Part of the 50S ribosomal subunit.

Functionally, one of the primary rRNA binding proteins, this protein initially binds near the 5'-end of the 23S rRNA. It is important during the early stages of 50S assembly. It makes multiple contacts with different domains of the 23S rRNA in the assembled 50S subunit and ribosome. Forms part of the polypeptide exit tunnel. This chain is Large ribosomal subunit protein uL4, found in Rubrobacter xylanophilus (strain DSM 9941 / JCM 11954 / NBRC 16129 / PRD-1).